The chain runs to 110 residues: Large ribosomal subunit protein uL22 (110 aa).

The protein belongs to the universal ribosomal protein uL22 family. As to quaternary structure, part of the 50S ribosomal subunit.

In terms of biological role, this protein binds specifically to 23S rRNA; its binding is stimulated by other ribosomal proteins, e.g. L4, L17, and L20. It is important during the early stages of 50S assembly. It makes multiple contacts with different domains of the 23S rRNA in the assembled 50S subunit and ribosome. The globular domain of the protein is located near the polypeptide exit tunnel on the outside of the subunit, while an extended beta-hairpin is found that lines the wall of the exit tunnel in the center of the 70S ribosome. The sequence is that of Large ribosomal subunit protein uL22 from Halorhodospira halophila (strain DSM 244 / SL1) (Ectothiorhodospira halophila (strain DSM 244 / SL1)).